The following is a 101-amino-acid chain: Large ribosomal subunit protein uL24 (101 aa).

This sequence belongs to the universal ribosomal protein uL24 family. As to quaternary structure, part of the 50S ribosomal subunit.

One of two assembly initiator proteins, it binds directly to the 5'-end of the 23S rRNA, where it nucleates assembly of the 50S subunit. Functionally, one of the proteins that surrounds the polypeptide exit tunnel on the outside of the subunit. This is Large ribosomal subunit protein uL24 from Streptococcus agalactiae serotype III (strain NEM316).